The sequence spans 82 residues: uncharacterized protein (82 aa).

A disordered region spans residues 1–20 (MMNLSPPFKSPSGSSRAGRR).

This is an uncharacterized protein from Archaeoglobus fulgidus (strain ATCC 49558 / DSM 4304 / JCM 9628 / NBRC 100126 / VC-16).